A 256-amino-acid chain; its full sequence is Nuclear shuttle protein (256 aa).

The segment at 18–50 is disordered; sequence VSRNQSSKRGTFVRRTDGKRRKGPSSKAHDEPK. The short motif at 21–42 is the Bipartite nuclear localization signal element; the sequence is NQSSKRGTFVRRTDGKRRKGPS. The short motif at 81–96 is the Nuclear localization signal element; that stretch reads VLGKIEPNRSRSYIKL. Residues 150–187 are interaction with Arabidopsis thaliana NSI protein; the sequence is EIFGARIHSHGNLAITPGLKDRYYVLHVLKRVLSVEKD.

The protein belongs to the begomovirus nuclear shuttle protein family. In terms of assembly, binds to single-stranded and double-stranded viral DNA. Interacts with the host nuclear shuttle interacting (NSI) protein. This interaction may allow NSP to recruit NSI monomers to the viral genome and thus regulate nuclear export of viral genome by NSP.

Its subcellular location is the host nucleus. The protein localises to the host cytoplasm. It is found in the host cell membrane. Its function is as follows. Binds to the genomic viral ssDNA, shuttles it into and out of the cell nucleus. Begomoviruses use 2 proteins to transport their DNA from cell to cell. The nuclear shuttle protein (NSP) shuttles it between nucleus and cytoplasm and the movement protein (MP) probably transports the DNA-NSP complex to the cell periphery and facilitates movement across the cell wall. The sequence is that of Nuclear shuttle protein from Brassica oleracea (Wild cabbage).